The chain runs to 103 residues: Regulator of rDNA transcription protein 1 (103 aa).

Transmembrane regions (helical) follow at residues 9-33 (FLPS…WVLV) and 40-57 (VAFI…YTFF).

Its subcellular location is the membrane. In terms of biological role, identified in a screen for mutants with decreased levels of rDNA transcription. This is Regulator of rDNA transcription protein 1 (RRT1) from Saccharomyces cerevisiae (strain ATCC 204508 / S288c) (Baker's yeast).